The following is a 124-amino-acid chain: Putative B3 domain-containing protein At1g51970 (124 aa).

A DNA-binding region (TF-B3) is located at residues 18 to 124 (VLKKNLTESD…SRRFLFHHIN (107 aa)).

It is found in the nucleus. This is Putative B3 domain-containing protein At1g51970 from Arabidopsis thaliana (Mouse-ear cress).